Reading from the N-terminus, the 288-residue chain is Phytanoyl-CoA dioxygenase domain-containing protein 1 homolog (288 aa).

2-oxoglutarate contacts are provided by residues Lys95, Met134, His149–Asp151, and Trp167. Fe cation is bound by residues His149 and Asp151. His242 is a binding site for Fe cation. 2 residues coordinate 2-oxoglutarate: Ser244 and Arg253.

It belongs to the PhyH family. PHYHD1 subfamily. Fe cation is required as a cofactor.

Functionally, has alpha-ketoglutarate-dependent dioxygenase activity. Does not show detectable activity towards fatty acid CoA thioesters. Is not expected to be active with phytanoyl CoA. The protein is Phytanoyl-CoA dioxygenase domain-containing protein 1 homolog of Caenorhabditis briggsae.